A 380-amino-acid polypeptide reads, in one-letter code: Set1 complex component swd3 (380 aa).

WD repeat units follow at residues 52–91, 94–133, 136–177, 179–219, 221–262, 291–330, and 335–374; these read GHEK…LECT, GHYR…SVRC, GHTN…RMLP, HSEP…KTLV, PINV…RIFD, NDSS…IIDD, and SDDP…SKHE. Residue S379 is modified to Phosphoserine.

In terms of assembly, component of the Set1 complex composed of ash2, sdc1, set1, shg1, spp1, swd1, swd2 and swd3.

The protein resides in the nucleus. Functionally, the Set1 complex specifically methylates 'Lys-4' of histone H3. The protein is Set1 complex component swd3 of Schizosaccharomyces pombe (strain 972 / ATCC 24843) (Fission yeast).